The following is a 682-amino-acid chain: Guanylate cyclase soluble subunit beta-2 (682 aa).

Position 43 (histidine 43) interacts with heme. Positions 408-536 (TILFSDVVTF…DTVNTASRME (129 aa)) constitute a Guanylate cyclase domain. The interval 592–667 (MGRPSAPADG…QPSPDETKTS (76 aa)) is disordered. Residues 649 to 667 (RNSTDAVNNQPSPDETKTS) are compositionally biased toward polar residues.

Belongs to the adenylyl cyclase class-4/guanylyl cyclase family. As to quaternary structure, heterodimer of an alpha and a beta chain. It depends on heme as a cofactor. Kidney and liver.

The protein localises to the cytoplasm. The enzyme catalyses GTP = 3',5'-cyclic GMP + diphosphate. Activated by nitric oxide in the presence of magnesium or manganese ions. The protein is Guanylate cyclase soluble subunit beta-2 (Gucy1b2) of Rattus norvegicus (Rat).